A 667-amino-acid polypeptide reads, in one-letter code: Alpha-1,4-glucan:maltose-1-phosphate maltosyltransferase (667 aa).

Alpha-maltose 1-phosphate contacts are provided by K261, Q321, and D356. D392 acts as the Nucleophile in catalysis. Alpha-maltose 1-phosphate is bound at residue N393. The active-site Proton donor is E421. Alpha-maltose 1-phosphate is bound at residue 534–535; sequence KY.

It belongs to the glycosyl hydrolase 13 family. GlgE subfamily. In terms of assembly, homodimer.

The catalysed reaction is alpha-maltose 1-phosphate + [(1-&gt;4)-alpha-D-glucosyl](n) = [(1-&gt;4)-alpha-D-glucosyl](n+2) + phosphate. Its function is as follows. Maltosyltransferase that uses maltose 1-phosphate (M1P) as the sugar donor to elongate linear or branched alpha-(1-&gt;4)-glucans. Is involved in a branched alpha-glucan biosynthetic pathway from trehalose, together with TreS, Mak and GlgB. This chain is Alpha-1,4-glucan:maltose-1-phosphate maltosyltransferase, found in Methylacidiphilum infernorum (isolate V4) (Methylokorus infernorum (strain V4)).